A 338-amino-acid polypeptide reads, in one-letter code: Pyridoxal 5'-phosphate synthase subunit PdxS (338 aa).

Asp66 is a binding site for D-ribose 5-phosphate. The active-site Schiff-base intermediate with D-ribose 5-phosphate is the Lys123. Gly195 is a D-ribose 5-phosphate binding site. Lys207 lines the D-glyceraldehyde 3-phosphate pocket. D-ribose 5-phosphate-binding positions include Gly256 and 277-278; that span reads GS.

Belongs to the PdxS/SNZ family. In terms of assembly, in the presence of PdxT, forms a dodecamer of heterodimers.

It carries out the reaction aldehydo-D-ribose 5-phosphate + D-glyceraldehyde 3-phosphate + L-glutamine = pyridoxal 5'-phosphate + L-glutamate + phosphate + 3 H2O + H(+). The protein operates within cofactor biosynthesis; pyridoxal 5'-phosphate biosynthesis. Catalyzes the formation of pyridoxal 5'-phosphate from ribose 5-phosphate (RBP), glyceraldehyde 3-phosphate (G3P) and ammonia. The ammonia is provided by the PdxT subunit. Can also use ribulose 5-phosphate and dihydroxyacetone phosphate as substrates, resulting from enzyme-catalyzed isomerization of RBP and G3P, respectively. The chain is Pyridoxal 5'-phosphate synthase subunit PdxS from Saccharolobus islandicus (strain L.S.2.15 / Lassen #1) (Sulfolobus islandicus).